Reading from the N-terminus, the 216-residue chain is ATP phosphoribosyltransferase (216 aa).

This sequence belongs to the ATP phosphoribosyltransferase family. Short subfamily. In terms of assembly, heteromultimer composed of HisG and HisZ subunits.

It localises to the cytoplasm. The catalysed reaction is 1-(5-phospho-beta-D-ribosyl)-ATP + diphosphate = 5-phospho-alpha-D-ribose 1-diphosphate + ATP. Its pathway is amino-acid biosynthesis; L-histidine biosynthesis; L-histidine from 5-phospho-alpha-D-ribose 1-diphosphate: step 1/9. Catalyzes the condensation of ATP and 5-phosphoribose 1-diphosphate to form N'-(5'-phosphoribosyl)-ATP (PR-ATP). Has a crucial role in the pathway because the rate of histidine biosynthesis seems to be controlled primarily by regulation of HisG enzymatic activity. This chain is ATP phosphoribosyltransferase, found in Thiobacillus denitrificans (strain ATCC 25259 / T1).